We begin with the raw amino-acid sequence, 209 residues long: Small ribosomal subunit protein uS3 (209 aa).

The KH type-2 domain occupies 38–107; that stretch reads IRKVVKNAYS…RVIVNVEEIK (70 aa).

The protein belongs to the universal ribosomal protein uS3 family. As to quaternary structure, part of the 30S ribosomal subunit. Forms a tight complex with proteins S10 and S14.

Its function is as follows. Binds the lower part of the 30S subunit head. Binds mRNA in the 70S ribosome, positioning it for translation. This Pseudothermotoga lettingae (strain ATCC BAA-301 / DSM 14385 / NBRC 107922 / TMO) (Thermotoga lettingae) protein is Small ribosomal subunit protein uS3.